Reading from the N-terminus, the 248-residue chain is Something about silencing protein 5 (248 aa).

Residues 1–139 (MDHSIEVTFR…SELSKYFDLP (139 aa)) form the YEATS domain. Ser144 carries the phosphoserine modification. Residues 223-248 (TKQERTNFGSDAIHKDEPVKAHNKLK) form a disordered region.

Component of the SAS complex, at least composed of SAS2, SAS4 and SAS5. These three proteins constitute the core of the complex, and are sufficient to acetylate histones.

It is found in the nucleus. Component of the SAS complex, a multiprotein complex that acetylates 'Lys-16' of histone H4 and 'Lys-14' of histone H3. The SAS complex is however unable to acetylate nucleosomal histones. The complex is involved in transcriptional silencing at telomeres and at HML locus. Also involved in rDNA silencing. In the complex, SAS5 is required for maximal histone acetyltransferase (HAT) activity of the complex, suggesting that it may be required to stabilize the complex or help in substrate recognition. The protein is Something about silencing protein 5 (SAS5) of Saccharomyces cerevisiae (strain ATCC 204508 / S288c) (Baker's yeast).